A 434-amino-acid polypeptide reads, in one-letter code: MRVVILGSGVVGVASAWYLAKAGHEVTVIDRQPGPAMETSAANAGQISPGYAAPWAAPGVPLKAVKWMFQRHAPLAVRLDGSSFQLSWMWQMLKNCNTEHYMTNKGRMVRLAEYSRDCIKALRQETGIQYEGRQGGTLQLFRTQQQFESAAKDIAVLEDAGVPYKLLEASQLASVEPALAQVAHKLTGGLQLPNDETGDCQLFTQQLAKLAQQAGVTFLYNRSVDRLLVEGDKISGVQCGGEIFKADSYVVAFGSYSTALLRDLVSIPVYPLKGYSLTIPITDESAAPFSTVLDETYKIAITRFDQRIRVGGMAEIVGFNTQLEQKRRETLEMVVRDLYPNGGRVEDATFWTGLRPMTPDGTPIVGKTSLKNLFLNTGHGTLGWTMACGSGQLLSDLISGITPAIPSDDLGVARYSAGFRSLYTGPLNDVHPAR.

3-17 (VVILGSGVVGVASAW) contributes to the FAD binding site.

It belongs to the DadA oxidoreductase family. The cofactor is FAD.

It carries out the reaction a D-alpha-amino acid + A + H2O = a 2-oxocarboxylate + AH2 + NH4(+). The protein operates within amino-acid degradation; D-alanine degradation; NH(3) and pyruvate from D-alanine: step 1/1. In terms of biological role, oxidative deamination of D-amino acids. The polypeptide is D-amino acid dehydrogenase (Serratia proteamaculans (strain 568)).